Consider the following 136-residue polypeptide: Nanos homolog 2 (136 aa).

Residues 27 to 51 (KQRQEGEVAEEPNSRPQEKSEQDLE) form a disordered region. Residues 28 to 48 (QRQEGEVAEEPNSRPQEKSEQ) show a composition bias toward basic and acidic residues. The Nanos-type zinc finger occupies 60–114 (ICNFCKHNGESRHVYTSHQLKTPEGVVVCPILRHYVCPLCGATGDQAHTLKYCPL). Zn(2+) is bound by residues Cys-61, Cys-64, His-77, Cys-88, Cys-96, Cys-99, His-107, and Cys-112. 2 consecutive short sequence motifs (C2HC) follow at residues 61 to 88 (CNFC…VVVC) and 96 to 112 (CPLC…LKYC).

It belongs to the nanos family. Interacts with CNOT1, CNOT3, CNOT6L, CNOT7 and CNOT9. As to expression, predominantly expressed in male germ cells. Expressed in self-renewing spermatogonial stem cells and developing gonads.

The protein resides in the cytoplasm. It is found in the P-body. The protein localises to the perinuclear region. Plays a key role in the sexual differentiation of germ cells by promoting the male fate but suppressing the female fate. Represses the female fate pathways by suppressing meiosis, which in turn results in the promotion of the male fate. Maintains the suppression of meiosis by preventing STRA8 expression, which is required for premeiotic DNA replication, after CYP26B1 is decreased. Regulates the localization of the CCR4-NOT deadenylation complex to P-bodies and plays a role in recruiting the complex to trigger the degradation of mRNAs involved in meiosis. Required for the maintenance of the spermatogonial stem cell population. Not essential for the assembly of P-bodies but is required for the maintenance of their normal state. The protein is Nanos homolog 2 (Nanos2) of Mus musculus (Mouse).